A 747-amino-acid polypeptide reads, in one-letter code: Polyribonucleotide nucleotidyltransferase (747 aa).

2 residues coordinate Mg(2+): Asp502 and Asp508. A KH domain is found at 569 to 628 (PRMLTITIDPDKIRDIIGPGGKIIKKIIEETGVEIDVEDDGRVFIASTDAAAGERALKII). Residues 638–712 (GKVYNGKVTR…PQGRLKLSRK (75 aa)) enclose the S1 motif domain. The tract at residues 718 to 747 (STVGEGGHRHFRRAGREGGHRGLNNRRQSR) is disordered.

It belongs to the polyribonucleotide nucleotidyltransferase family. Requires Mg(2+) as cofactor.

It localises to the cytoplasm. It carries out the reaction RNA(n+1) + phosphate = RNA(n) + a ribonucleoside 5'-diphosphate. In terms of biological role, involved in mRNA degradation. Catalyzes the phosphorolysis of single-stranded polyribonucleotides processively in the 3'- to 5'-direction. The chain is Polyribonucleotide nucleotidyltransferase from Moorella thermoacetica (strain ATCC 39073 / JCM 9320).